The primary structure comprises 149 residues: 3-hydroxyacyl-[acyl-carrier-protein] dehydratase FabZ (149 aa).

The active site involves H52.

Belongs to the thioester dehydratase family. FabZ subfamily.

The protein localises to the cytoplasm. The catalysed reaction is a (3R)-hydroxyacyl-[ACP] = a (2E)-enoyl-[ACP] + H2O. Involved in unsaturated fatty acids biosynthesis. Catalyzes the dehydration of short chain beta-hydroxyacyl-ACPs and long chain saturated and unsaturated beta-hydroxyacyl-ACPs. This Cupriavidus necator (strain ATCC 17699 / DSM 428 / KCTC 22496 / NCIMB 10442 / H16 / Stanier 337) (Ralstonia eutropha) protein is 3-hydroxyacyl-[acyl-carrier-protein] dehydratase FabZ.